The chain runs to 463 residues: UDP-N-acetylmuramoylalanine--D-glutamate ligase (463 aa).

126–132 (GSNGKST) contributes to the ATP binding site.

This sequence belongs to the MurCDEF family.

It localises to the cytoplasm. The enzyme catalyses UDP-N-acetyl-alpha-D-muramoyl-L-alanine + D-glutamate + ATP = UDP-N-acetyl-alpha-D-muramoyl-L-alanyl-D-glutamate + ADP + phosphate + H(+). Its pathway is cell wall biogenesis; peptidoglycan biosynthesis. Its function is as follows. Cell wall formation. Catalyzes the addition of glutamate to the nucleotide precursor UDP-N-acetylmuramoyl-L-alanine (UMA). In Idiomarina loihiensis (strain ATCC BAA-735 / DSM 15497 / L2-TR), this protein is UDP-N-acetylmuramoylalanine--D-glutamate ligase.